Consider the following 212-residue polypeptide: Large ribosomal subunit protein uL3 (212 aa).

The protein belongs to the universal ribosomal protein uL3 family. Part of the 50S ribosomal subunit. Forms a cluster with proteins L14 and L19.

Its function is as follows. One of the primary rRNA binding proteins, it binds directly near the 3'-end of the 23S rRNA, where it nucleates assembly of the 50S subunit. The sequence is that of Large ribosomal subunit protein uL3 from Acetivibrio thermocellus (strain ATCC 27405 / DSM 1237 / JCM 9322 / NBRC 103400 / NCIMB 10682 / NRRL B-4536 / VPI 7372) (Clostridium thermocellum).